Consider the following 261-residue polypeptide: Triosephosphate isomerase (261 aa).

10–12 contacts substrate; sequence NWK. His100 functions as the Electrophile in the catalytic mechanism. Glu172 functions as the Proton acceptor in the catalytic mechanism. Substrate is bound by residues Gly178, Ser218, and 239–240; that span reads GG.

Belongs to the triosephosphate isomerase family. In terms of assembly, homodimer.

It is found in the cytoplasm. It catalyses the reaction D-glyceraldehyde 3-phosphate = dihydroxyacetone phosphate. It participates in carbohydrate biosynthesis; gluconeogenesis. It functions in the pathway carbohydrate degradation; glycolysis; D-glyceraldehyde 3-phosphate from glycerone phosphate: step 1/1. In terms of biological role, involved in the gluconeogenesis. Catalyzes stereospecifically the conversion of dihydroxyacetone phosphate (DHAP) to D-glyceraldehyde-3-phosphate (G3P). This is Triosephosphate isomerase from Mycolicibacterium vanbaalenii (strain DSM 7251 / JCM 13017 / BCRC 16820 / KCTC 9966 / NRRL B-24157 / PYR-1) (Mycobacterium vanbaalenii).